A 368-amino-acid polypeptide reads, in one-letter code: E3 ubiquitin-protein ligase E3D (368 aa).

Ala-2 carries the N-acetylalanine modification. The BRAT1-like motif motif lies at 129-159; that stretch reads PLPSENWSALVGEWCCHPDPFANRPLHPREN. Cys-144 contacts Zn(2+). An interaction with UBE2C region spans residues 214–236; that stretch reads RPSEGSFPNIPRSQFLQSIIAQC. The segment at 332–368 is HECT-like; the sequence is LPSATCLELLLILSRNNASLPLSLRQMNSFQVAFLKM.

In terms of assembly, interacts with UBE2C/UbcH10 (E2 ubiquitin-conjugating enzyme). In vitro, interacts with cyclin-B. In terms of processing, ubiquitinated by UBCH10 (E2 ubiquitin-conjugating enzyme).

It localises to the cytoplasm. It carries out the reaction S-ubiquitinyl-[E2 ubiquitin-conjugating enzyme]-L-cysteine + [acceptor protein]-L-lysine = [E2 ubiquitin-conjugating enzyme]-L-cysteine + N(6)-ubiquitinyl-[acceptor protein]-L-lysine.. Its pathway is protein modification; protein ubiquitination. Its function is as follows. E3 ubiquitin-protein ligase which accepts ubiquitin from specific E2 ubiquitin-conjugating enzymes, and transfers it to substrates, generally promoting their degradation by the proteasome. Independently of its E3 ubiquitin-protein ligase activity, acts as an inhibitor of CPSF3 endonuclease activity by blocking CPSF3 active site. The chain is E3 ubiquitin-protein ligase E3D (Ube3d) from Mus musculus (Mouse).